We begin with the raw amino-acid sequence, 940 residues long: Alanine--tRNA ligase (940 aa).

Zn(2+)-binding residues include His581, His585, Cys683, and His687.

Belongs to the class-II aminoacyl-tRNA synthetase family. It depends on Zn(2+) as a cofactor.

It is found in the cytoplasm. It catalyses the reaction tRNA(Ala) + L-alanine + ATP = L-alanyl-tRNA(Ala) + AMP + diphosphate. Catalyzes the attachment of alanine to tRNA(Ala) in a two-step reaction: alanine is first activated by ATP to form Ala-AMP and then transferred to the acceptor end of tRNA(Ala). Also edits incorrectly charged Ser-tRNA(Ala) and Gly-tRNA(Ala) via its editing domain. In Leptospira borgpetersenii serovar Hardjo-bovis (strain JB197), this protein is Alanine--tRNA ligase.